Consider the following 384-residue polypeptide: Neuropeptide Y receptor type 1 (384 aa).

The Extracellular portion of the chain corresponds to 1–44 (MNSTLFSQVENHSVHSNFSEKNAQLLAFENDDCHLPLAMIFTLA). Residues N2, N11, and N17 are each glycosylated (N-linked (GlcNAc...) asparagine). Residues 45–65 (LAYGAVIILGVSGNLALIIII) form a helical membrane-spanning segment. The Cytoplasmic portion of the chain corresponds to 66 to 76 (LKQKEMRNVTN). The chain crosses the membrane as a helical span at residues 77-97 (ILIVNLSFSDLLVAIMCLPFT). Residues 98–116 (FVYTLMDHWVFGEAMCKLN) are Extracellular-facing. C113 and C198 are joined by a disulfide. The chain crosses the membrane as a helical span at residues 117–137 (PFVQCVSITVSIFSLVLIAVE). Residues 138-154 (RHQLIINPRGWRPNNRH) are Cytoplasmic-facing. Residues 155–175 (AYVGIAVIWVLAVASSLPFLI) traverse the membrane as a helical segment. Over 176–211 (YQVMTDEPFQNVTLDAYKDKYVCFDQFPSDSHRLSY) the chain is Extracellular. Residues 212-232 (TTLLLVLQYFGPLCFIFICYF) traverse the membrane as a helical segment. The Cytoplasmic portion of the chain corresponds to 233-260 (KIYIRLKRRNNMMDKMRDNKYRSSETKR). A helical transmembrane segment spans residues 261–281 (INIMLLSIVVAFAVCWLPLTI). The Extracellular portion of the chain corresponds to 282 to 299 (FNTVFDWNHQIIATCNHN). Residues 300–320 (LLFLLCHLTAMISTCVNPIFY) form a helical membrane-spanning segment. The Cytoplasmic segment spans residues 321-384 (GFLNKNFQRD…INNNDDNEKI (64 aa)). C338 carries S-palmitoyl cysteine lipidation. S368 carries the post-translational modification Phosphoserine.

Belongs to the G-protein coupled receptor 1 family.

It localises to the cell membrane. In terms of biological role, receptor for neuropeptide Y and peptide YY. The rank order of affinity of this receptor for pancreatic polypeptides is NPY &gt; [Pro-34] PYY, PYY and [Leu-31, Pro-34] NPY &gt; NPY (2-36) &gt; [Ile-31, Gln-34] PP and PYY (3-36) &gt; PP &gt; NPY free acid. This is Neuropeptide Y receptor type 1 (NPY1R) from Homo sapiens (Human).